The chain runs to 145 residues: Transcription antitermination protein NusB (145 aa).

The protein belongs to the NusB family.

Its function is as follows. Involved in transcription antitermination. Required for transcription of ribosomal RNA (rRNA) genes. Binds specifically to the boxA antiterminator sequence of the ribosomal RNA (rrn) operons. The chain is Transcription antitermination protein NusB from Psychromonas ingrahamii (strain DSM 17664 / CCUG 51855 / 37).